Here is a 225-residue protein sequence, read N- to C-terminus: Transmembrane protein C16orf54 homolog (225 aa).

Residues 34–54 (IPIMLGLASLTAFFIITTAVL) traverse the membrane as a helical segment. Positions 107–149 (RAPDPPTPGGTLEGRATAPPAIPTPHPSPSSLVPQTPPEVPAQ) are disordered. Thr-113 and Thr-117 each carry phosphothreonine. Ser-195 bears the Phosphoserine mark.

It is found in the membrane. The chain is Transmembrane protein C16orf54 homolog from Rattus norvegicus (Rat).